A 73-amino-acid polypeptide reads, in one-letter code: Translation initiation factor IF-1 (73 aa).

An S1-like domain is found at 1-73 (MAKKDGAIEV…TRGRIVYRYK (73 aa)).

It belongs to the IF-1 family. In terms of assembly, component of the 30S ribosomal translation pre-initiation complex which assembles on the 30S ribosome in the order IF-2 and IF-3, IF-1 and N-formylmethionyl-tRNA(fMet); mRNA recruitment can occur at any time during PIC assembly.

The protein localises to the cytoplasm. Functionally, one of the essential components for the initiation of protein synthesis. Stabilizes the binding of IF-2 and IF-3 on the 30S subunit to which N-formylmethionyl-tRNA(fMet) subsequently binds. Helps modulate mRNA selection, yielding the 30S pre-initiation complex (PIC). Upon addition of the 50S ribosomal subunit IF-1, IF-2 and IF-3 are released leaving the mature 70S translation initiation complex. This Mycolicibacterium gilvum (strain PYR-GCK) (Mycobacterium gilvum (strain PYR-GCK)) protein is Translation initiation factor IF-1.